The chain runs to 663 residues: UvrABC system protein B (663 aa).

In terms of domain architecture, Helicase ATP-binding spans 31–271; the sequence is DNIEGGEKAQ…EASIAKIQAE (241 aa). 44–51 contributes to the ATP binding site; that stretch reads GATGTGKT. Residues 97–120 carry the Beta-hairpin motif; that stretch reads YYDYYQPEAYVPSSDTYIEKDSSV. The Helicase C-terminal domain occupies 435–601; that stretch reads QMDDLLGEIN…TIKKEIRDLI (167 aa). The region spanning 627–662 is the UVR domain; that stretch reads QEAIKKLQKQMHEAAELLDFELAAQIRDMVLELKSM.

This sequence belongs to the UvrB family. Forms a heterotetramer with UvrA during the search for lesions. Interacts with UvrC in an incision complex.

It localises to the cytoplasm. Its function is as follows. The UvrABC repair system catalyzes the recognition and processing of DNA lesions. A damage recognition complex composed of 2 UvrA and 2 UvrB subunits scans DNA for abnormalities. Upon binding of the UvrA(2)B(2) complex to a putative damaged site, the DNA wraps around one UvrB monomer. DNA wrap is dependent on ATP binding by UvrB and probably causes local melting of the DNA helix, facilitating insertion of UvrB beta-hairpin between the DNA strands. Then UvrB probes one DNA strand for the presence of a lesion. If a lesion is found the UvrA subunits dissociate and the UvrB-DNA preincision complex is formed. This complex is subsequently bound by UvrC and the second UvrB is released. If no lesion is found, the DNA wraps around the other UvrB subunit that will check the other stand for damage. This chain is UvrABC system protein B, found in Streptococcus uberis (strain ATCC BAA-854 / 0140J).